The primary structure comprises 219 residues: Small ribosomal subunit protein uS3 (219 aa).

Positions 38–106 (IREYIENRLK…RVHINIFEVK (69 aa)) constitute a KH type-2 domain.

This sequence belongs to the universal ribosomal protein uS3 family. As to quaternary structure, part of the 30S ribosomal subunit. Forms a tight complex with proteins S10 and S14.

Binds the lower part of the 30S subunit head. Binds mRNA in the 70S ribosome, positioning it for translation. The sequence is that of Small ribosomal subunit protein uS3 from Halalkalibacterium halodurans (strain ATCC BAA-125 / DSM 18197 / FERM 7344 / JCM 9153 / C-125) (Bacillus halodurans).